Reading from the N-terminus, the 458-residue chain is Phosphoglucosamine mutase (458 aa).

Ser-106 functions as the Phosphoserine intermediate in the catalytic mechanism. Ser-106, Asp-247, Asp-249, and Asp-251 together coordinate Mg(2+). At Ser-106 the chain carries Phosphoserine.

The protein belongs to the phosphohexose mutase family. Mg(2+) serves as cofactor. Post-translationally, activated by phosphorylation.

The enzyme catalyses alpha-D-glucosamine 1-phosphate = D-glucosamine 6-phosphate. In terms of biological role, catalyzes the conversion of glucosamine-6-phosphate to glucosamine-1-phosphate. In Chlamydia trachomatis serovar D (strain ATCC VR-885 / DSM 19411 / UW-3/Cx), this protein is Phosphoglucosamine mutase.